A 115-amino-acid chain; its full sequence is Aspartate 1-decarboxylase (115 aa).

Serine 24 (schiff-base intermediate with substrate; via pyruvic acid) is an active-site residue. The residue at position 24 (serine 24) is a Pyruvic acid (Ser). Threonine 56 lines the substrate pocket. Tyrosine 57 serves as the catalytic Proton donor. A substrate-binding site is contributed by 72 to 74; sequence GAA.

Belongs to the PanD family. In terms of assembly, heterooctamer of four alpha and four beta subunits. It depends on pyruvate as a cofactor. Is synthesized initially as an inactive proenzyme, which is activated by self-cleavage at a specific serine bond to produce a beta-subunit with a hydroxyl group at its C-terminus and an alpha-subunit with a pyruvoyl group at its N-terminus.

The protein localises to the cytoplasm. The catalysed reaction is L-aspartate + H(+) = beta-alanine + CO2. It participates in cofactor biosynthesis; (R)-pantothenate biosynthesis; beta-alanine from L-aspartate: step 1/1. Functionally, catalyzes the pyruvoyl-dependent decarboxylation of aspartate to produce beta-alanine. In Pseudothermotoga lettingae (strain ATCC BAA-301 / DSM 14385 / NBRC 107922 / TMO) (Thermotoga lettingae), this protein is Aspartate 1-decarboxylase.